Reading from the N-terminus, the 406-residue chain is MSACRGFLLRRINDSCLTFRRHKFKKKWATTLPKIPCSRLALQYFDINYSMQFGDLWPSIRISLLTEQKYGALVNNFSHKETVLNNLSALKAKDFISEAQSVISLLQTQNNVDTSEKMVFTEVPLNLVGEKNDAEQTQATNLLSSLSNSKLTCFTFSRGDISRFPQSRSDCFGLLEYYLMDAASLLPVLALDIQHGHSVLDLCAAPGGKTLALLQTENCQYLAANDLSTSRSSRLHRVLHSYVPRDQRAEHKVRITSWDGRLWGDLEASTYDRVLVDVPCTTDRHSLLEEENNIFHRIRTKQRQMLPLLQTELLVSGLRAVRPGGEVVYSTCSLSQLQNECVVQRAIELAATDHGVLVKPQDLSCFREVFKNTFNFFQDCRVGELVVPHLTANFGPMFFCKLLRIK.

G207, G208, K209, D226, R231, D259, G260, and D277 together coordinate S-adenosyl-L-methionine. C332 functions as the Nucleophile in the catalytic mechanism.

This sequence belongs to the class I-like SAM-binding methyltransferase superfamily. RsmB/NOP family.

The protein resides in the mitochondrion. The catalysed reaction is a cytidine in rRNA + S-adenosyl-L-methionine = a 5-methylcytidine in rRNA + S-adenosyl-L-homocysteine + H(+). The enzyme catalyses a cytidine in mRNA + S-adenosyl-L-methionine = a 5-methylcytidine in mRNA + S-adenosyl-L-homocysteine + H(+). In terms of biological role, mitochondrial RNA cytosine C(5)-methyltransferase that methylates cytosine to 5-methylcytosine (m5C) in various RNAs, such as rRNAs, mRNAs and some long non-coding RNAs (lncRNAs). Involved in mitochondrial ribosome small subunit (SSU) maturation by catalyzing methylation of mitochondrial 12S rRNA. In Xenopus laevis (African clawed frog), this protein is 5-cytosine rRNA methyltransferase NSUN4 (nsun4).